We begin with the raw amino-acid sequence, 94 residues long: Phosphoribosyl-ATP pyrophosphatase (94 aa).

Belongs to the PRA-PH family.

Its subcellular location is the cytoplasm. The catalysed reaction is 1-(5-phospho-beta-D-ribosyl)-ATP + H2O = 1-(5-phospho-beta-D-ribosyl)-5'-AMP + diphosphate + H(+). It participates in amino-acid biosynthesis; L-histidine biosynthesis; L-histidine from 5-phospho-alpha-D-ribose 1-diphosphate: step 2/9. This Pyrobaculum neutrophilum (strain DSM 2338 / JCM 9278 / NBRC 100436 / V24Sta) (Thermoproteus neutrophilus) protein is Phosphoribosyl-ATP pyrophosphatase.